An 858-amino-acid chain; its full sequence is Piwi-like protein 1 (858 aa).

Basic residues predominate over residues 1 to 13 (MTGRARARSRGRG). The disordered stretch occupies residues 1–56 (MTGRARARSRGRGRGQEPAAPGAQPPVSQEAAKPVVSTPSEGQLVGRGRQKPAPGA). Positions 16 to 26 (QEPAAPGAQPP) are enriched in low complexity. The PAZ domain occupies 276-388 (TVLDFMYSLR…LVPEFCYLTG (113 aa)). Residues 314-316 (TYR) are required for binding 2'-O-methylated 3'-end of piRNAs. Positions 476–612 (SKEMRGLPLI…LQMNCKMGGE (137 aa)) are MID region. Residues 552-844 (MVVVILPTNR…LAFLVGQSIH (293 aa)) form the Piwi domain. Active-site residues include D629, E667, D699, and H833.

This sequence belongs to the argonaute family. Piwi subfamily. It depends on Mg(2+) as a cofactor. In terms of processing, methylated on arginine residues; required for the interaction with Tudor domain-containing protein and subsequent localization to the meiotic nuage, also named P granule. As to expression, expressed exclusively in the adult gonads; expression in the ovary weaker than in the testis (at protein level). During neurogenesis and organogenesis, expression is detected in CNS (midbrain and eye) and fin buds. Starting from 24 hours post-fertilization, expression is found in the genital ridge.

It localises to the cytoplasm. Functionally, plays a central role during gametogenesis by repressing transposable elements and preventing their mobilization, which is essential for the germline integrity. Acts via the piRNA metabolic process, which mediates the repression of transposable elements during meiosis by forming complexes composed of piRNAs and Piwi proteins and governs the methylation and subsequent repression of transposons. Directly binds methylated piRNAs, a class of 24 to 30 nucleotide RNAs that are generated by a Dicer-independent mechanism and are primarily derived from transposons and other repeated sequence elements. Has a strong preference for piRNAs with a uridine nucleotide at their 5'-end (g1U preference, also named 1U-bias) and binds piRNAs in an opposite direction compared to piwil2/zili. Participates in a piRNA amplification loop with piwil2/zili. Not involved in the piRNA amplification loop, also named ping-pong amplification cycle. Acts as an endoribonuclease that cleaves transposon messenger RNAs. The chain is Piwi-like protein 1 (piwil1) from Danio rerio (Zebrafish).